Reading from the N-terminus, the 170-residue chain is Ribosome maturation factor RimM (170 aa).

A PRC barrel domain is found at 97–170 (KNEFYWTDLI…QIRVEWGSDW (74 aa)).

The protein belongs to the RimM family. Binds ribosomal protein uS19.

The protein localises to the cytoplasm. In terms of biological role, an accessory protein needed during the final step in the assembly of 30S ribosomal subunit, possibly for assembly of the head region. Essential for efficient processing of 16S rRNA. May be needed both before and after RbfA during the maturation of 16S rRNA. It has affinity for free ribosomal 30S subunits but not for 70S ribosomes. This Dechloromonas aromatica (strain RCB) protein is Ribosome maturation factor RimM.